The sequence spans 419 residues: Protein FAM217A (419 aa).

Disordered regions lie at residues 1-23, 100-119, 234-298, and 362-388; these read MGRK…QENL, DKRN…LSES, PSSS…SRSL, and PIPL…HRKS. Positions 7–23 are enriched in polar residues; it reads ESCSANPHSSSISQENL. The segment covering 284 to 298 has biased composition (polar residues); the sequence is SLSTAGKSKSNSRSL. The span at 378–388 shows a compositional bias: basic residues; it reads PRTKKKCHRKS.

Belongs to the FAM217 family.

The chain is Protein FAM217A (Fam217a) from Rattus norvegicus (Rat).